Consider the following 468-residue polypeptide: 3-isopropylmalate dehydratase large subunit (468 aa).

Positions 345, 405, and 408 each coordinate [4Fe-4S] cluster.

This sequence belongs to the aconitase/IPM isomerase family. LeuC type 1 subfamily. In terms of assembly, heterodimer of LeuC and LeuD. Requires [4Fe-4S] cluster as cofactor.

It carries out the reaction (2R,3S)-3-isopropylmalate = (2S)-2-isopropylmalate. It participates in amino-acid biosynthesis; L-leucine biosynthesis; L-leucine from 3-methyl-2-oxobutanoate: step 2/4. Catalyzes the isomerization between 2-isopropylmalate and 3-isopropylmalate, via the formation of 2-isopropylmaleate. In Oceanobacillus iheyensis (strain DSM 14371 / CIP 107618 / JCM 11309 / KCTC 3954 / HTE831), this protein is 3-isopropylmalate dehydratase large subunit.